Here is a 366-residue protein sequence, read N- to C-terminus: 1-deoxy-D-xylulose 5-phosphate reductoisomerase (366 aa).

Positions 7, 8, 9, 10, 31, 32, 33, and 113 each coordinate NADPH. Residue lysine 114 coordinates 1-deoxy-D-xylulose 5-phosphate. Residue glutamate 115 coordinates NADPH. Residue aspartate 133 participates in Mn(2+) binding. Residues serine 134, glutamate 135, serine 158, and histidine 181 each coordinate 1-deoxy-D-xylulose 5-phosphate. A Mn(2+)-binding site is contributed by glutamate 135. Residue glycine 187 participates in NADPH binding. 4 residues coordinate 1-deoxy-D-xylulose 5-phosphate: serine 194, asparagine 199, lysine 200, and glutamate 203. Glutamate 203 is a binding site for Mn(2+).

Belongs to the DXR family. Mg(2+) serves as cofactor. Mn(2+) is required as a cofactor.

The enzyme catalyses 2-C-methyl-D-erythritol 4-phosphate + NADP(+) = 1-deoxy-D-xylulose 5-phosphate + NADPH + H(+). The protein operates within isoprenoid biosynthesis; isopentenyl diphosphate biosynthesis via DXP pathway; isopentenyl diphosphate from 1-deoxy-D-xylulose 5-phosphate: step 1/6. Functionally, catalyzes the NADPH-dependent rearrangement and reduction of 1-deoxy-D-xylulose-5-phosphate (DXP) to 2-C-methyl-D-erythritol 4-phosphate (MEP). This chain is 1-deoxy-D-xylulose 5-phosphate reductoisomerase, found in Helicobacter pylori (strain G27).